The primary structure comprises 120 residues: Large ribosomal subunit protein uL18 (120 aa).

The protein belongs to the universal ribosomal protein uL18 family. In terms of assembly, part of the 50S ribosomal subunit; part of the 5S rRNA/L5/L18/L25 subcomplex. Contacts the 5S and 23S rRNAs.

Its function is as follows. This is one of the proteins that bind and probably mediate the attachment of the 5S RNA into the large ribosomal subunit, where it forms part of the central protuberance. The chain is Large ribosomal subunit protein uL18 from Gluconobacter oxydans (strain 621H) (Gluconobacter suboxydans).